The following is a 318-amino-acid chain: MFLINTLLLILPVLLAMAFLTLVERKILGYMQLRKGPNIVGPYGLLQPIADAIKLFTKEPLRPLTSSPLLFIIAPTLALTLALSMWLPIPMPYPLVNLNMGILFILATSSLAVYSILWSGWASNSKYALFGALRAVAQTISYEVTLAIILLCILLMNGSFTLSSLITTQEYMWILLPAWPLAMMWFISTLAETNRAPFDLTEGESELVSGFNVEYAGGPFALFFLAEYTNIILMNALTAILFLGSFHSHTNPEMFTVNFATKTLLLTMTFLWIRASYPRFRYDQLMHLLWKSFLPLTLALCMWHISMPIMLSSIPPQM.

A run of 8 helical transmembrane segments spans residues 2-22 (FLIN…FLTL), 69-89 (LLFI…WLPI), 102-122 (ILFI…SGWA), 146-166 (LAII…SSLI), 171-191 (YMWI…STLA), 222-242 (LFFL…AILF), 253-273 (EMFT…FLWI), and 294-314 (LPLT…LSSI).

This sequence belongs to the complex I subunit 1 family. Core subunit of respiratory chain NADH dehydrogenase (Complex I) which is composed of 45 different subunits.

The protein resides in the mitochondrion inner membrane. It carries out the reaction a ubiquinone + NADH + 5 H(+)(in) = a ubiquinol + NAD(+) + 4 H(+)(out). In terms of biological role, core subunit of the mitochondrial membrane respiratory chain NADH dehydrogenase (Complex I) which catalyzes electron transfer from NADH through the respiratory chain, using ubiquinone as an electron acceptor. Essential for the catalytic activity and assembly of complex I. This chain is NADH-ubiquinone oxidoreductase chain 1 (MT-ND1), found in Oryctolagus cuniculus (Rabbit).